Here is a 647-residue protein sequence, read N- to C-terminus: Chaperone protein DnaK (647 aa).

Phosphothreonine; by autocatalysis is present on threonine 199. The segment at 602-647 (MYAQEQAQAGQQAGPGAGSASAGQSGEKPVEGEVVDAEFEEVKDKK) is disordered. Residues 604-627 (AQEQAQAGQQAGPGAGSASAGQSG) are compositionally biased toward low complexity.

The protein belongs to the heat shock protein 70 family.

Acts as a chaperone. The chain is Chaperone protein DnaK from Nitrosomonas eutropha (strain DSM 101675 / C91 / Nm57).